Here is a 271-residue protein sequence, read N- to C-terminus: UPF0328 protein ECU09_0020 (271 aa).

Belongs to the UPF0328 family.

The sequence is that of UPF0328 protein ECU09_0020 from Encephalitozoon cuniculi (strain GB-M1) (Microsporidian parasite).